The sequence spans 1079 residues: Transport and Golgi organization protein 6 homolog (1079 aa).

A helical membrane pass occupies residues 473 to 493; the sequence is VPVLLDSLLPLLRVFFSLYCF. Ser561 is modified (phosphoserine). The interval 767–818 is disordered; that stretch reads AQSTLNQKDPGQKIEEQRQTSPDISTEGAQKPPRTGQGSSGPCTATSQPPGS. Composition is skewed to polar residues over residues 785–794 and 802–818; these read QTSPDISTEG and GQGSSGPCTATSQPPGS. 2 HEAT repeats span residues 864-902 and 937-973; these read LLQIFLENLEHEDSFVYLSAIQGIALLSDVYPEEILVDL and SKYREPLIHTFLRGVRDPDAAHRASSLANLGELCQCL.

The protein belongs to the Tango6 family.

It is found in the membrane. The polypeptide is Transport and Golgi organization protein 6 homolog (Tango6) (Mus musculus (Mouse)).